A 185-amino-acid polypeptide reads, in one-letter code: ATP synthase subunit b (185 aa).

The helical transmembrane segment at 28-48 threads the bilayer; that stretch reads VVLVGFAVLMYIVVKFVVPMF.

Belongs to the ATPase B chain family. F-type ATPases have 2 components, F(1) - the catalytic core - and F(0) - the membrane proton channel. F(1) has five subunits: alpha(3), beta(3), gamma(1), delta(1), epsilon(1). F(0) has three main subunits: a(1), b(2) and c(10-14). The alpha and beta chains form an alternating ring which encloses part of the gamma chain. F(1) is attached to F(0) by a central stalk formed by the gamma and epsilon chains, while a peripheral stalk is formed by the delta and b chains.

The protein localises to the cell membrane. In terms of biological role, f(1)F(0) ATP synthase produces ATP from ADP in the presence of a proton or sodium gradient. F-type ATPases consist of two structural domains, F(1) containing the extramembraneous catalytic core and F(0) containing the membrane proton channel, linked together by a central stalk and a peripheral stalk. During catalysis, ATP synthesis in the catalytic domain of F(1) is coupled via a rotary mechanism of the central stalk subunits to proton translocation. Component of the F(0) channel, it forms part of the peripheral stalk, linking F(1) to F(0). In Paenarthrobacter aurescens (strain TC1), this protein is ATP synthase subunit b.